The primary structure comprises 209 residues: Large ribosomal subunit protein uL4 (209 aa).

Residues 46–72 are disordered; sequence GTSSTKTRSEVRGSSKKPWKQKGTGRA. Over residues 59 to 72 the composition is skewed to basic residues; sequence SSKKPWKQKGTGRA.

This sequence belongs to the universal ribosomal protein uL4 family. Part of the 50S ribosomal subunit.

Its function is as follows. One of the primary rRNA binding proteins, this protein initially binds near the 5'-end of the 23S rRNA. It is important during the early stages of 50S assembly. It makes multiple contacts with different domains of the 23S rRNA in the assembled 50S subunit and ribosome. Functionally, forms part of the polypeptide exit tunnel. The polypeptide is Large ribosomal subunit protein uL4 (Borreliella burgdorferi (strain ATCC 35210 / DSM 4680 / CIP 102532 / B31) (Borrelia burgdorferi)).